The chain runs to 382 residues: Neuropeptide Y receptor type 1 (382 aa).

The Extracellular portion of the chain corresponds to 1–33; sequence MNSTLFSKVENHSIHYNASENSPLLAFENDDCH. Asn2, Asn11, and Asn17 each carry an N-linked (GlcNAc...) asparagine glycan. A helical membrane pass occupies residues 34–54; it reads LPLAVIFTLALAYGAVIILGV. Topologically, residues 55-75 are cytoplasmic; the sequence is SGNLALIIIILKQKEMRNVTN. The chain crosses the membrane as a helical span at residues 76–96; that stretch reads ILIVNLSFSDLLVAVMCLPFT. Over 97-115 the chain is Extracellular; the sequence is FVYTLMDHWVFGETMCKLN. Cysteines 112 and 197 form a disulfide. The chain crosses the membrane as a helical span at residues 116-136; it reads PFVQCVSITVSIFSLVLIAVE. The Cytoplasmic segment spans residues 137–153; sequence RHQLIINPRGWRPNNRH. The helical transmembrane segment at 154–174 threads the bilayer; the sequence is AYIGITVIWVLAVASSLPFVI. Residues 175–210 lie on the Extracellular side of the membrane; that stretch reads YQILTDEPFQNVSLAAFKDKYVCFDKFPSDSHRLSY. A helical membrane pass occupies residues 211-231; sequence TTLLLVLQYFGPLCFIFICYF. Residues 232 to 259 lie on the Cytoplasmic side of the membrane; that stretch reads KIYIRLKRRNNMMDKIRDSKYRSSETKR. Residues 260–280 traverse the membrane as a helical segment; it reads INIMLLSIVVAFAVCWLPLTI. The Extracellular segment spans residues 281 to 298; it reads FNTVFDWNHQIIATCNHN. A helical membrane pass occupies residues 299 to 319; that stretch reads LLFLLCHLTAMISTCVNPIFY. The Cytoplasmic portion of the chain corresponds to 320–382; that stretch reads GFLNKNFQRD…KISMNDNEKV (63 aa). Cys337 carries the S-palmitoyl cysteine lipid modification. Phosphoserine is present on residues Ser367 and Ser375.

This sequence belongs to the G-protein coupled receptor 1 family. The alpha form is highly expressed in the brain, heart, kidney, spleen, skeletal muscle, and lung, whereas the beta receptor mRNA was not detected in these tissues. However, the beta form is expressed in mouse embryonic developmental stage (7 and 11 days), bone marrow cells and several hematopoietic cell lines.

It localises to the cell membrane. Receptor for neuropeptide Y and peptide YY. In Mus musculus (Mouse), this protein is Neuropeptide Y receptor type 1 (Npy1r).